A 680-amino-acid chain; its full sequence is Probable oxidoreductase YoaE (680 aa).

Positions 9–66 (NGIFKSVCSLDCPDQCGLLIHKKDGKIVKVQGDPDHPVTAGNICNKVRNMTERIYDEK) constitute a 4Fe-4S Mo/W bis-MGD-type domain. Positions 16, 20, 24, and 52 each coordinate [4Fe-4S] cluster.

The protein belongs to the prokaryotic molybdopterin-containing oxidoreductase family. The cofactor is Mo-bis(molybdopterin guanine dinucleotide).

The chain is Probable oxidoreductase YoaE (yoaE) from Bacillus subtilis (strain 168).